The primary structure comprises 587 residues: L-ascorbate oxidase (587 aa).

The signal sequence occupies residues 1-33 (MAKVADKPFFPKPFLSFLVLSIIFGFGITLSEA). 2 consecutive Plastocyanin-like domains span residues 38-157 (IKHY…LIVD) and 169-335 (DEEI…NYLP). 3 cysteine pairs are disulfide-bonded: Cys54–Cys236, Cys116–Cys574, and Cys215–Cys228. Cu cation is bound by residues His95, His97, His139, and His141. N-linked (GlcNAc...) asparagine glycosylation is found at Asn360, Asn401, and Asn475. Residues 379 to 559 (NRRLFLLNTQ…HMGMGVVFAE (181 aa)) form the Plastocyanin-like 3 domain. Positions 480, 483, 485, 542, 543, 544, 548, and 553 each coordinate Cu cation.

This sequence belongs to the multicopper oxidase family. In terms of assembly, dimer. Requires Cu cation as cofactor.

It localises to the secreted. It catalyses the reaction 4 L-ascorbate + O2 = 4 monodehydro-L-ascorbate radical + 2 H2O. Functionally, may be involved in a redox system involving ascorbic acid. The polypeptide is L-ascorbate oxidase (Cucumis sativus (Cucumber)).